Reading from the N-terminus, the 109-residue chain is Class I hydrophobin dewE (109 aa).

An N-terminal signal peptide occupies residues 1–20; the sequence is MKVATALSVLAVAGSALASA. 4 disulfides stabilise this stretch: Cys34/Cys87, Cys40/Cys81, Cys41/Cys74, and Cys88/Cys102.

It belongs to the fungal hydrophobin family. In terms of assembly, self-assembles to form functional amyloid fibrils called rodlets. Self-assembly into fibrillar rodlets occurs spontaneously at hydrophobic:hydrophilic interfaces and the rodlets further associate laterally to form amphipathic monolayers.

It localises to the secreted. The protein resides in the spore wall. Functionally, aerial growth, conidiation, and dispersal of filamentous fungi in the environment rely upon a capability of their secreting small amphipathic proteins called hydrophobins (HPBs) with low sequence identity. Class I can self-assemble into an outermost layer of rodlet bundles on aerial cell surfaces, conferring cellular hydrophobicity that supports fungal growth, development and dispersal; whereas Class II form highly ordered films at water-air interfaces through intermolecular interactions but contribute nothing to the rodlet structure. DewE is a class I hydrophobin that contributes to the hydrophobicity of the spore surface. The sequence is that of Class I hydrophobin dewE from Emericella nidulans (strain FGSC A4 / ATCC 38163 / CBS 112.46 / NRRL 194 / M139) (Aspergillus nidulans).